The following is a 267-amino-acid chain: GTP cyclohydrolase MptA (267 aa).

Belongs to the GTP cyclohydrolase IV family. As to quaternary structure, homodimer. Fe(2+) is required as a cofactor.

It carries out the reaction GTP + H2O = 7,8-dihydroneopterin 2',3'-cyclic phosphate + formate + diphosphate + H(+). Its pathway is cofactor biosynthesis; 5,6,7,8-tetrahydromethanopterin biosynthesis. Converts GTP to 7,8-dihydro-D-neopterin 2',3'-cyclic phosphate, the first intermediate in the biosynthesis of coenzyme methanopterin. In Thermococcus kodakarensis (strain ATCC BAA-918 / JCM 12380 / KOD1) (Pyrococcus kodakaraensis (strain KOD1)), this protein is GTP cyclohydrolase MptA.